The primary structure comprises 353 residues: Phosphate acyltransferase (353 aa).

This sequence belongs to the PlsX family. Homodimer. Probably interacts with PlsY.

It localises to the cytoplasm. It carries out the reaction a fatty acyl-[ACP] + phosphate = an acyl phosphate + holo-[ACP]. It functions in the pathway lipid metabolism; phospholipid metabolism. Its function is as follows. Catalyzes the reversible formation of acyl-phosphate (acyl-PO(4)) from acyl-[acyl-carrier-protein] (acyl-ACP). This enzyme utilizes acyl-ACP as fatty acyl donor, but not acyl-CoA. The polypeptide is Phosphate acyltransferase (Rhodopseudomonas palustris (strain HaA2)).